The following is a 231-amino-acid chain: Large ribosomal subunit protein uL1 (231 aa).

The protein belongs to the universal ribosomal protein uL1 family. In terms of assembly, part of the 50S ribosomal subunit.

Functionally, binds directly to 23S rRNA. The L1 stalk is quite mobile in the ribosome, and is involved in E site tRNA release. In terms of biological role, protein L1 is also a translational repressor protein, it controls the translation of the L11 operon by binding to its mRNA. The protein is Large ribosomal subunit protein uL1 of Ralstonia nicotianae (strain ATCC BAA-1114 / GMI1000) (Ralstonia solanacearum).